Here is a 213-residue protein sequence, read N- to C-terminus: Nucleoside triphosphate pyrophosphatase (213 aa).

The active-site Proton acceptor is aspartate 79.

It belongs to the Maf family. The cofactor is a divalent metal cation.

It is found in the cytoplasm. The catalysed reaction is a ribonucleoside 5'-triphosphate + H2O = a ribonucleoside 5'-phosphate + diphosphate + H(+). It carries out the reaction a 2'-deoxyribonucleoside 5'-triphosphate + H2O = a 2'-deoxyribonucleoside 5'-phosphate + diphosphate + H(+). In terms of biological role, nucleoside triphosphate pyrophosphatase. May have a dual role in cell division arrest and in preventing the incorporation of modified nucleotides into cellular nucleic acids. This Mycobacterium leprae (strain Br4923) protein is Nucleoside triphosphate pyrophosphatase.